Here is a 100-residue protein sequence, read N- to C-terminus: Urease subunit gamma (100 aa).

The protein belongs to the urease gamma subunit family. In terms of assembly, heterotrimer of UreA (gamma), UreB (beta) and UreC (alpha) subunits. Three heterotrimers associate to form the active enzyme.

Its subcellular location is the cytoplasm. It carries out the reaction urea + 2 H2O + H(+) = hydrogencarbonate + 2 NH4(+). The protein operates within nitrogen metabolism; urea degradation; CO(2) and NH(3) from urea (urease route): step 1/1. This is Urease subunit gamma from Haemophilus influenzae (strain PittEE).